A 356-amino-acid chain; its full sequence is Sterol-4-alpha-carboxylate 3-dehydrogenase, decarboxylating (356 aa).

Met1 bears the N-acetylmethionine mark. Tyr155 acts as the Proton acceptor in catalysis. Lys159 is an NAD(+) binding site. A helical membrane pass occupies residues 281-301; it reads WLAYYLALLVSLLVMVISPVI. The short motif at 353-356 is the Prevents secretion from ER element; the sequence is RKVM.

The protein belongs to the 3-beta-HSD family. As to quaternary structure, homodimer.

Its subcellular location is the endoplasmic reticulum membrane. The protein resides in the lipid droplet. It catalyses the reaction a 3beta-hydroxysteroid-4alpha-carboxylate + NADP(+) = a 3-oxosteroid + CO2 + NADPH. It carries out the reaction a 3beta-hydroxysteroid-4alpha-carboxylate + NAD(+) = a 3-oxosteroid + CO2 + NADH. The enzyme catalyses 4alpha-carboxyzymosterol + NADP(+) = zymosterone + CO2 + NADPH. The catalysed reaction is 4alpha-carboxy-4beta-methyl-5alpha-cholest-8-en-3beta-ol + NADP(+) = 4alpha-methyl-5alpha-cholest-8-en-3-one + CO2 + NADPH. It catalyses the reaction 4alpha-carboxy-5alpha-cholest-8-ene-3beta-ol + NADP(+) = 5alpha-cholest-8-en-3-one + CO2 + NADPH. It carries out the reaction 4beta-methylzymosterol-4alpha-carboxylate + NADP(+) = 3-dehydro-4-methylzymosterol + CO2 + NADPH. The enzyme catalyses 4beta-methylzymosterol-4alpha-carboxylate + NAD(+) = 3-dehydro-4-methylzymosterol + CO2 + NADH. The catalysed reaction is 4alpha-carboxy-5alpha-cholest-8-ene-3beta-ol + NAD(+) = 5alpha-cholest-8-en-3-one + CO2 + NADH. It catalyses the reaction 4alpha-carboxy-4beta-methyl-5alpha-cholest-8-en-3beta-ol + NAD(+) = 4alpha-methyl-5alpha-cholest-8-en-3-one + CO2 + NADH. It carries out the reaction 4alpha-carboxyzymosterol + NAD(+) = zymosterone + CO2 + NADH. Its pathway is steroid biosynthesis; zymosterol biosynthesis; zymosterol from lanosterol: step 4/6. Functionally, catalyzes the NAD(P)(+)-dependent oxidative decarboxylation of the C4 methyl groups of 4-alpha-carboxysterols in post-squalene cholesterol biosynthesis. Also plays a role in the regulation of the endocytic trafficking of EGFR. This chain is Sterol-4-alpha-carboxylate 3-dehydrogenase, decarboxylating (NSDHL), found in Bos taurus (Bovine).